Consider the following 206-residue polypeptide: Ribosomal RNA small subunit methyltransferase G (206 aa).

S-adenosyl-L-methionine-binding positions include glycine 74, leucine 79, 125-126 (VE), and arginine 140.

This sequence belongs to the methyltransferase superfamily. RNA methyltransferase RsmG family.

Its subcellular location is the cytoplasm. It catalyses the reaction guanosine(527) in 16S rRNA + S-adenosyl-L-methionine = N(7)-methylguanosine(527) in 16S rRNA + S-adenosyl-L-homocysteine. In terms of biological role, specifically methylates the N7 position of guanine in position 527 of 16S rRNA. The polypeptide is Ribosomal RNA small subunit methyltransferase G (Shewanella baltica (strain OS223)).